The sequence spans 59 residues: Conotoxin ViVA (59 aa).

Positions 1–19 are cleaved as a signal peptide; sequence MRCVPVFIILLLLIPSASS. Positions 20–46 are excised as a propeptide; sequence AAVQPKTEKDDVPLASVHDSALRILSR. Gln-47 carries the pyrrolidone carboxylic acid modification. 2 cysteine pairs are disulfide-bonded: Cys-48-Cys-55 and Cys-49-Cys-56. The residue at position 58 (Ile-58) is an Isoleucine amide.

Belongs to the conotoxin T superfamily. Expressed by the venom duct.

The protein resides in the secreted. This Conus virgo (Virgin cone) protein is Conotoxin ViVA.